The primary structure comprises 2462 residues: Piezo-type mechanosensitive ion channel homolog (2462 aa).

Transmembrane regions (helical) follow at residues 5–25 (LVGFLLPSLLLAAALINWSVI), 27–47 (FLDLIAFLLVHYIAPEIGYRF), 57–77 (IFIFSFAVFLAQVVYLVIWAA), 105–125 (TVMYFLALQLLTSLVALADIY), 163–183 (AVQLAVGICNPSWVSLPFFIG), 207–227 (LYIYAGFNIVLLYLYQLPINF), 248–268 (EGPDICSGLFLVLFYIMLSYV), 325–345 (FFTYGFPVSLFALSFWSFHFA), 347–367 (LCAFGLLAYVGYIIYAFPSLF), 374–394 (GLLLVFILLWAVSTYIFNVAF), 404–424 (FGLGMLVALGNLVNNSVFLYL), 467–487 (LIFLIAMKPGFFHAVYVIFFL), 502–522 (SLILLCEVHFALLYILEIDLV), 554–574 (IALLACFCAIHNHGFEVLFSF), 653–673 (VYLVKPNYVSFGYIFLLLLWI), 694–714 (AVLVFMFIYCLSSFVSLQLWL), 730–750 (APLLDNVWESLAVLIVMQLYS), 792–812 (FYASLSPISVFGFVYLLGLVI), and 826–846 (SFLIYTGFLVSAEYLFQLWGM). The interval 927-947 (ASVSSSNGENPSSTDHASISM) is disordered. Residues 928-939 (SVSSSNGENPSS) are compositionally biased toward low complexity. 8 consecutive transmembrane segments (helical) span residues 1027–1047 (FWIENMFNLYGLEINMIALLL), 1050–1070 (FALLNAISMVYIALLAACVLL), 1078–1098 (LWPVVVFLFASILAIEYVATW), 1143–1160 (TLISYFVVFMLACFKLRA), 1204–1224 (LYCYVHLLDVVLILILITGTL), 1228–1248 (ILHLGYLAFALVFARMRLEIL), 1260–1280 (VYNFVLIIFSLAYQSPFVGNF), and 1310–1330 (SALVEIIIFMLVSLQSYMFSS). Residues 1347 to 1400 (AIVREQEKKAARKTEQLQQIREAEEKKRQRNLQVEKMKSEMLNLRVQLHRMNSD) are a coiled coil. Positions 1543–1583 (SDTNEQSSVDDEVYDEMESQKRKHTPFERSTSLQSDRSSDG) are disordered. The segment covering 1550–1559 (SVDDEVYDEM) has biased composition (acidic residues). The span at 1570-1583 (ERSTSLQSDRSSDG) shows a compositional bias: polar residues. The next 8 membrane-spanning stretches (helical) occupy residues 1611–1631 (FIIAFLWNFSLLSMVYLAALF), 1647–1667 (VIMLMYTEIYILLQYLYQIII), 1916–1936 (YIFGADLIVFFLVAIFYQSVI), 1956–1976 (FVIILMVIFFLIVVDRVIYLC), 1984–2004 (VYYLFSLILFTYAVTEYAWSI), 2012–2032 (AGLALRIIFLAKAMSLALQAI), 2130–2150 (GICLFFILLCVIWAPMLMYSS), and 2369–2389 (FLGDTLSKFSIWGLYITFVLA).

It belongs to the PIEZO (TC 1.A.75) family.

The protein localises to the membrane. Its function is as follows. Pore-forming subunit of a mechanosensitive non-specific cation channel, that conducts both sodium and potassium ions. The sequence is that of Piezo-type mechanosensitive ion channel homolog from Arabidopsis thaliana (Mouse-ear cress).